Consider the following 409-residue polypeptide: ATPase ASNA1 homolog (409 aa).

An ATP-binding site is contributed by Lys-21 to Thr-28. The active site involves Asp-62. Positions 303 and 330 each coordinate ATP. The Zn(2+) site is built by Cys-342 and Cys-345.

Belongs to the arsA ATPase family. Homodimer.

The protein resides in the cytoplasm. The protein localises to the endoplasmic reticulum. Functionally, ATPase required for the post-translational delivery of tail-anchored (TA) proteins to the endoplasmic reticulum. Recognizes and selectively binds the transmembrane domain of TA proteins in the cytosol. This complex then targets to the endoplasmic reticulum by membrane-bound receptors, where the tail-anchored protein is released for insertion. This process is regulated by ATP binding and hydrolysis. ATP binding drives the homodimer towards the closed dimer state, facilitating recognition of newly synthesized TA membrane proteins. ATP hydrolysis is required for insertion. Subsequently, the homodimer reverts towards the open dimer state, lowering its affinity for the membrane-bound receptor, and returning it to the cytosol to initiate a new round of targeting. The chain is ATPase ASNA1 homolog from Leishmania major.